The following is a 338-amino-acid chain: Aspartate carbamoyltransferase catalytic subunit (338 aa).

Positions 72 and 73 each coordinate carbamoyl phosphate. Lys100 serves as a coordination point for L-aspartate. Arg122, His152, and Gln155 together coordinate carbamoyl phosphate. L-aspartate is bound by residues Arg186 and Arg243. Carbamoyl phosphate is bound by residues Gly284 and Pro285.

This sequence belongs to the aspartate/ornithine carbamoyltransferase superfamily. ATCase family. In terms of assembly, heterododecamer (2C3:3R2) of six catalytic PyrB chains organized as two trimers (C3), and six regulatory PyrI chains organized as three dimers (R2).

It catalyses the reaction carbamoyl phosphate + L-aspartate = N-carbamoyl-L-aspartate + phosphate + H(+). It functions in the pathway pyrimidine metabolism; UMP biosynthesis via de novo pathway; (S)-dihydroorotate from bicarbonate: step 2/3. Its function is as follows. Catalyzes the condensation of carbamoyl phosphate and aspartate to form carbamoyl aspartate and inorganic phosphate, the committed step in the de novo pyrimidine nucleotide biosynthesis pathway. The polypeptide is Aspartate carbamoyltransferase catalytic subunit (Acinetobacter baumannii (strain AB307-0294)).